Reading from the N-terminus, the 195-residue chain is MSDINQIEFSEISKKDELKSIIESLLFVSGEPLALKDICRIVEEDFKYVEDLMRELMNIYNGDSSRGIKIISLNGTYQLVTKTKNSEYIQKLLKKNVRQSLSQASLESLAIICYKQPITRVEIDEIRGVKSESAIQRLVEKNLVEETGRLEVPGRPILYGTTDEFLRHFALNDLGDLPSIELFEENNEVSDMVEE.

Belongs to the ScpB family. As to quaternary structure, homodimer. Homodimerization may be required to stabilize the binding of ScpA to the Smc head domains. Component of a cohesin-like complex composed of ScpA, ScpB and the Smc homodimer, in which ScpA and ScpB bind to the head domain of Smc. The presence of the three proteins is required for the association of the complex with DNA.

The protein localises to the cytoplasm. In terms of biological role, participates in chromosomal partition during cell division. May act via the formation of a condensin-like complex containing Smc and ScpA that pull DNA away from mid-cell into both cell halves. This is Segregation and condensation protein B from Clostridium perfringens (strain SM101 / Type A).